The sequence spans 471 residues: MSGYQNGGPRGLADDSDVEEEALVADYREQVQYEEGMDDPDMGLAQQTDDIQSRLVAAAQPLDFSAPLEVKFQSYDQYCSLFHFILNSDGPVDLEPPSYYWAWDVIDEFIYQFNSFSSYRMRIARQANNEEEAQILRENPNTWGCYSVLNVLYSLIQRSQILEQLQAMKRNEDPMAVAGDYGSRSLYRMLGYFSIIGLLRVHCLLGDFSLALRTLDDIELNKKAMFARVMAAHFTTYYYVGFSYMMVRRYADAIRMFSHILVYVSRTKNFQKNAQYDSITKKNDQMLALIAICVAFHPTRLDDTIHTALREKFGDQLLKLQRGGPESLPVYEELFRTACPKFISPVPPDFDNPEANVDPIEHHLSVFMDEVKTNMWSPTVKSYLRLYTTMDLKKLAGFLSVKPEELRSWLLVNKQRTKQLRWADHGLLDGELVNVSDLDYAMQGDLIHISEAKVGRKLVDWYLRNLSRTYV.

Positions 252-446 (DAIRMFSHIL…DLDYAMQGDL (195 aa)) constitute a PCI domain.

The protein belongs to the eIF-3 subunit L family.

It is found in the cytoplasm. In terms of biological role, component of the eukaryotic translation initiation factor 3 (eIF-3) complex, which is involved in protein synthesis of a specialized repertoire of mRNAs and, together with other initiation factors, stimulates binding of mRNA and methionyl-tRNAi to the 40S ribosome. The eIF-3 complex specifically targets and initiates translation of a subset of mRNAs involved in cell proliferation. The sequence is that of Eukaryotic translation initiation factor 3 subunit L from Pyricularia oryzae (strain Y34) (Rice blast fungus).